Reading from the N-terminus, the 321-residue chain is Glycerol-3-phosphate dehydrogenase [NAD(P)+] (321 aa).

Ser14, Phe15, Arg35, and Lys109 together coordinate NADPH. Lys109 and Gly137 together coordinate sn-glycerol 3-phosphate. Residue Ala141 participates in NADPH binding. Sn-glycerol 3-phosphate contacts are provided by Lys192, Asp252, Ser262, Arg263, and Asn264. Lys192 functions as the Proton acceptor in the catalytic mechanism. Arg263 lines the NADPH pocket. NADPH contacts are provided by Leu287 and Glu289.

It belongs to the NAD-dependent glycerol-3-phosphate dehydrogenase family.

It is found in the cytoplasm. It catalyses the reaction sn-glycerol 3-phosphate + NAD(+) = dihydroxyacetone phosphate + NADH + H(+). It carries out the reaction sn-glycerol 3-phosphate + NADP(+) = dihydroxyacetone phosphate + NADPH + H(+). Its pathway is membrane lipid metabolism; glycerophospholipid metabolism. Catalyzes the reduction of the glycolytic intermediate dihydroxyacetone phosphate (DHAP) to sn-glycerol 3-phosphate (G3P), the key precursor for phospholipid synthesis. The sequence is that of Glycerol-3-phosphate dehydrogenase [NAD(P)+] from Rickettsia felis (strain ATCC VR-1525 / URRWXCal2) (Rickettsia azadi).